The primary structure comprises 248 residues: PF03932 family protein CutC (248 aa).

Belongs to the CutC family. In terms of assembly, homodimer.

It is found in the cytoplasm. The polypeptide is PF03932 family protein CutC (Escherichia coli O9:H4 (strain HS)).